Consider the following 142-residue polypeptide: Ribonuclease VapC31 (142 aa).

The region spanning 3-139 (LLDANVLLAA…ARFASVRHIR (137 aa)) is the PINc domain. 2 residues coordinate Mg(2+): D5 and D108.

It belongs to the PINc/VapC protein family. Mg(2+) is required as a cofactor.

Toxic component of a type II toxin-antitoxin (TA) system. An RNase. Its toxic effect is neutralized by coexpression with cognate antitoxin VapB31. The protein is Ribonuclease VapC31 of Mycobacterium tuberculosis (strain CDC 1551 / Oshkosh).